The chain runs to 316 residues: L-lactate dehydrogenase (316 aa).

Residues Val-15, Asp-36, Arg-41, Tyr-66, and 80–81 (GA) contribute to the NAD(+) site. Residues Gln-83, Arg-90, and 122–125 (NPVD) contribute to the substrate site. NAD(+)-binding positions include 120–122 (ATN) and Thr-145. 150–153 (DTAR) lines the substrate pocket. Residues Arg-155 and His-170 each contribute to the beta-D-fructose 1,6-bisphosphate site. The Proton acceptor role is filled by His-177. Tyr-222 is modified (phosphotyrosine). Thr-231 serves as a coordination point for substrate. The tract at residues 287-316 (DPGLSDEEREALRDSARALRDSRADLTVGT) is disordered. The span at 296–310 (EALRDSARALRDSRA) shows a compositional bias: basic and acidic residues.

This sequence belongs to the LDH/MDH superfamily. LDH family. In terms of assembly, homotetramer.

It is found in the cytoplasm. It catalyses the reaction (S)-lactate + NAD(+) = pyruvate + NADH + H(+). The protein operates within fermentation; pyruvate fermentation to lactate; (S)-lactate from pyruvate: step 1/1. Its activity is regulated as follows. Allosterically activated by fructose 1,6-bisphosphate (FBP). Functionally, catalyzes the conversion of lactate to pyruvate. The chain is L-lactate dehydrogenase from Salinibacter ruber (strain DSM 13855 / M31).